The sequence spans 550 residues: Protein UshA (550 aa).

The N-terminal stretch at 1–25 is a signal peptide; the sequence is MKFLKRGVALALLAAFALTTQPAQA. Asp-41, His-43, Asp-84, Asn-116, His-217, His-252, and Gln-254 together coordinate Zn(2+). An intrachain disulfide couples Cys-258 to Cys-275. Residues Phe-429 and 498-504 contribute to the substrate site; that span reads FNATGGD.

It belongs to the 5'-nucleotidase family. As to quaternary structure, monomer. Requires Zn(2+) as cofactor.

The protein localises to the periplasm. It catalyses the reaction UDP-sugar + H2O = UMP + alpha-D-aldose 1-phosphate.. The catalysed reaction is a ribonucleoside 5'-phosphate + H2O = a ribonucleoside + phosphate. Its function is as follows. Degradation of external UDP-glucose to uridine monophosphate and glucose-1-phosphate, which can then be used by the cell. The sequence is that of Protein UshA (ushA) from Salmonella pullorum.